The primary structure comprises 173 residues: Large ribosomal subunit protein bL9 (173 aa).

Belongs to the bacterial ribosomal protein bL9 family.

Its function is as follows. Binds to the 23S rRNA. This Rickettsia bellii (strain RML369-C) protein is Large ribosomal subunit protein bL9.